Consider the following 60-residue polypeptide: Large ribosomal subunit protein bL32 (60 aa).

Positions 1 to 23 are enriched in basic residues; it reads MACPKKKTSNAKRDQRRAHWRKQ. The tract at residues 1-60 is disordered; that stretch reads MACPKKKTSNAKRDQRRAHWRKQAAREAQKALSLGKSVLSGRSNSFVYPTKEEEEGEDEE.

The protein belongs to the bacterial ribosomal protein bL32 family.

The chain is Large ribosomal subunit protein bL32 from Microcystis aeruginosa (strain NIES-843 / IAM M-2473).